A 202-amino-acid chain; its full sequence is Imidazole glycerol phosphate synthase subunit HisH (202 aa).

The 200-residue stretch at 3 to 202 folds into the Glutamine amidotransferase type-1 domain; the sequence is RIVIIDYGLG…KILRNFVEMC (200 aa). Catalysis depends on Cys79, which acts as the Nucleophile. Catalysis depends on residues His183 and Glu185.

In terms of assembly, heterodimer of HisH and HisF.

Its subcellular location is the cytoplasm. The enzyme catalyses 5-[(5-phospho-1-deoxy-D-ribulos-1-ylimino)methylamino]-1-(5-phospho-beta-D-ribosyl)imidazole-4-carboxamide + L-glutamine = D-erythro-1-(imidazol-4-yl)glycerol 3-phosphate + 5-amino-1-(5-phospho-beta-D-ribosyl)imidazole-4-carboxamide + L-glutamate + H(+). It catalyses the reaction L-glutamine + H2O = L-glutamate + NH4(+). Its pathway is amino-acid biosynthesis; L-histidine biosynthesis; L-histidine from 5-phospho-alpha-D-ribose 1-diphosphate: step 5/9. Its function is as follows. IGPS catalyzes the conversion of PRFAR and glutamine to IGP, AICAR and glutamate. The HisH subunit catalyzes the hydrolysis of glutamine to glutamate and ammonia as part of the synthesis of IGP and AICAR. The resulting ammonia molecule is channeled to the active site of HisF. This is Imidazole glycerol phosphate synthase subunit HisH from Methanosarcina mazei (strain ATCC BAA-159 / DSM 3647 / Goe1 / Go1 / JCM 11833 / OCM 88) (Methanosarcina frisia).